The chain runs to 246 residues: Bis(5'-nucleosyl)-tetraphosphatase PrpE [asymmetrical] (246 aa).

This sequence belongs to the PrpE family. Requires Ni(2+) as cofactor.

It carries out the reaction P(1),P(4)-bis(5'-guanosyl) tetraphosphate + H2O = GMP + GTP + 2 H(+). Its function is as follows. Asymmetrically hydrolyzes Ap4p to yield AMP and ATP. This chain is Bis(5'-nucleosyl)-tetraphosphatase PrpE [asymmetrical], found in Bacillus thuringiensis subsp. konkukian (strain 97-27).